The following is a 156-amino-acid chain: Small ribosomal subunit protein uS7 (156 aa).

It belongs to the universal ribosomal protein uS7 family. Part of the 30S ribosomal subunit. Contacts proteins S9 and S11.

One of the primary rRNA binding proteins, it binds directly to 16S rRNA where it nucleates assembly of the head domain of the 30S subunit. Is located at the subunit interface close to the decoding center, probably blocks exit of the E-site tRNA. The protein is Small ribosomal subunit protein uS7 of Burkholderia ambifaria (strain MC40-6).